The primary structure comprises 2392 residues: Protein Ycf2 (2392 aa).

Residue 1658–1665 participates in ATP binding; the sequence is GPTEIGKS.

Belongs to the Ycf2 family.

The protein localises to the plastid. Its subcellular location is the chloroplast stroma. Probable ATPase of unknown function. Its presence in a non-photosynthetic plant (Epifagus virginiana) and experiments in tobacco indicate that it has an essential function which is probably not related to photosynthesis. The sequence is that of Protein Ycf2 from Anthoceros angustus (Hornwort).